We begin with the raw amino-acid sequence, 383 residues long: tRNA-specific 2-thiouridylase MnmA (383 aa).

ATP-binding positions include 9 to 16 (GMSGGVDS) and Met35. Positions 95–97 (NPD) are interaction with target base in tRNA. Residue Cys100 is the Nucleophile of the active site. Cys100 and Cys196 are joined by a disulfide. ATP is bound at residue Gly124. Residues 146 to 148 (KDQ) are interaction with tRNA. Catalysis depends on Cys196, which acts as the Cysteine persulfide intermediate. Positions 308–309 (RY) are interaction with tRNA.

It belongs to the MnmA/TRMU family.

It localises to the cytoplasm. It catalyses the reaction S-sulfanyl-L-cysteinyl-[protein] + uridine(34) in tRNA + AH2 + ATP = 2-thiouridine(34) in tRNA + L-cysteinyl-[protein] + A + AMP + diphosphate + H(+). Its function is as follows. Catalyzes the 2-thiolation of uridine at the wobble position (U34) of tRNA, leading to the formation of s(2)U34. This chain is tRNA-specific 2-thiouridylase MnmA, found in Burkholderia pseudomallei (strain 668).